The sequence spans 506 residues: NAD(P)H-quinone oxidoreductase chain 4, chloroplastic (506 aa).

The next 14 membrane-spanning stretches (helical) occupy residues F5–L25, W35–K55, M88–I108, L114–D134, I135–L155, F168–F188, A209–F229, H243–I263, V275–T295, S309–L329, G331–G351, S386–L406, F415–L435, and I463–T483.

The protein belongs to the complex I subunit 4 family.

It localises to the plastid. Its subcellular location is the chloroplast thylakoid membrane. The enzyme catalyses a plastoquinone + NADH + (n+1) H(+)(in) = a plastoquinol + NAD(+) + n H(+)(out). It carries out the reaction a plastoquinone + NADPH + (n+1) H(+)(in) = a plastoquinol + NADP(+) + n H(+)(out). The polypeptide is NAD(P)H-quinone oxidoreductase chain 4, chloroplastic (Chaetosphaeridium globosum (Charophycean green alga)).